The chain runs to 504 residues: Chromosomal replication initiator protein DnaA (504 aa).

The domain I, interacts with DnaA modulators stretch occupies residues 1–109; it reads MTADPDPPFV…PTDEPEDAPD (109 aa). The interval 98-162 is disordered; the sequence is ATPTDEPEDA…PDTSSDDSNA (65 aa). Positions 109-125 are enriched in low complexity; it reads DSFADSPAPASVPAGPA. The tract at residues 110–163 is domain II; it reads SFADSPAPASVPAGPADADEIDDDRDARVNAQESWPKYFSRPEPDTSSDDSNAV. Positions 164-380 are domain III, AAA+ region; the sequence is NLNRRYTFDT…GALIRVTAFA (217 aa). 4 residues coordinate ATP: G208, G210, K211, and T212. The domain IV, binds dsDNA stretch occupies residues 381-504; it reads SLNKTRIDRS…TTRIRQRAKR (124 aa).

It belongs to the DnaA family. As to quaternary structure, oligomerizes as a right-handed, spiral filament on DNA at oriC.

It is found in the cytoplasm. In terms of biological role, plays an essential role in the initiation and regulation of chromosomal replication. ATP-DnaA binds to the origin of replication (oriC) to initiate formation of the DNA replication initiation complex once per cell cycle. Binds the DnaA box (a 9 base pair repeat at the origin) and separates the double-stranded (ds)DNA. Forms a right-handed helical filament on oriC DNA; dsDNA binds to the exterior of the filament while single-stranded (ss)DNA is stabiized in the filament's interior. The ATP-DnaA-oriC complex binds and stabilizes one strand of the AT-rich DNA unwinding element (DUE), permitting loading of DNA polymerase. After initiation quickly degrades to an ADP-DnaA complex that is not apt for DNA replication. Binds acidic phospholipids. The probable consensus sequence for the DnaA box of this bacterium is 5'-TT(G/C)TCCACA-3'. The polypeptide is Chromosomal replication initiator protein DnaA (Mycolicibacterium smegmatis (strain ATCC 700084 / mc(2)155) (Mycobacterium smegmatis)).